The following is a 25-amino-acid chain: Xenoposin precursor fragment R2 (25 aa).

Expressed by the skin glands.

The protein localises to the secreted. Antimicrobial peptide. This chain is Xenoposin precursor fragment R2, found in Xenopus ruwenzoriensis (Uganda clawed frog).